The chain runs to 314 residues: Malate dehydrogenase (314 aa).

Residues 11 to 16 and aspartate 35 each bind NAD(+); that span reads GSGNIG. Residues arginine 84 and arginine 90 each coordinate substrate. NAD(+) is bound by residues asparagine 97 and 120–122; that span reads ITN. Substrate contacts are provided by asparagine 122 and arginine 153. Catalysis depends on histidine 177, which acts as the Proton acceptor.

Belongs to the LDH/MDH superfamily. MDH type 3 family.

The catalysed reaction is (S)-malate + NAD(+) = oxaloacetate + NADH + H(+). Catalyzes the reversible oxidation of malate to oxaloacetate. This Rickettsia bellii (strain RML369-C) protein is Malate dehydrogenase.